The chain runs to 612 residues: MIQVLLVTICLAVFPYQGSSIILGSGNVNDYEVVYPRKVTALPKGAAQPKYEDTMQYEFKVNGEPVVLHLEKNKGLFSEDYSETHYSPDGREITTYPPVEDHCYYHGRIQNDADSTASISACNGLKGHFKLQGEMYLIEPLELSDSEAHAVFKYENVEKEDEAPKMCGVTQNWESYEPIKKASQLNLTPEQQRYLNTKKYIELVIVADNVMVKKYTSNSTAIRTRIYACVNTLNLIYRAFNIHIALVGIEIWSNKDLINVISASNVTLDLFGNWRRRVLLRRKRHDNAQLLTAIDLDGPTIGLARVGSMCDPKCSTGIVQDHSKLDVMVAVTMAHELAHNLGINHDGNQCNCGGNPCIMSATLNFEPAYRFSDCSRDEHWRYLIDNRPPCILNKPLITDIVSPPVCGNYFVEVGEECDCGLPAHCQNPCCNAATCKLRPGTQCEDGECCEQCQFTSAGTECRAAKSECDIAESCTGQSADCPTDNFQRNGRPCLNNNGYCYNGKCPTLDHQCISFFGSSATVAPDVCFNLNLKGEGNFYCRRENTRIFPCAPQDKKCGRLFCVLGPTGNTISCQSTYSQSDLDIGMVDLGTKCGDGRVCNSTRQCVDVNTAY.

An N-terminal signal peptide occupies residues 1 to 20 (MIQVLLVTICLAVFPYQGSS). Residues 21–189 (IILGSGNVND…KKASQLNLTP (169 aa)) constitute a propeptide that is removed on maturation. The 197-residue stretch at 199–395 (KYIELVIVAD…NRPPCILNKP (197 aa)) folds into the Peptidase M12B domain. Position 202 (Glu-202) interacts with Ca(2+). Residue Asn-218 is glycosylated (N-linked (GlcNAc...) asparagine). Ca(2+) is bound at residue Asp-286. 3 disulfides stabilise this stretch: Cys-310/Cys-390, Cys-350/Cys-374, and Cys-352/Cys-357. His-335 is a binding site for Zn(2+). Glu-336 is an active-site residue. Zn(2+) is bound by residues His-339 and His-345. Residues Cys-390, Asn-393, Val-405, Asn-408, Phe-410, Glu-412, Glu-415, and Asp-418 each coordinate Ca(2+). The region spanning 403 to 489 (PPVCGNYFVE…DCPTDNFQRN (87 aa)) is the Disintegrin domain. 14 disulfide bridges follow: Cys-406/Cys-435, Cys-417/Cys-430, Cys-419/Cys-425, Cys-429/Cys-452, Cys-443/Cys-449, Cys-448/Cys-474, Cys-461/Cys-481, Cys-468/Cys-500, Cys-493/Cys-505, Cys-512/Cys-562, Cys-527/Cys-573, Cys-540/Cys-550, Cys-557/Cys-599, and Cys-593/Cys-605. The D/ECD-tripeptide motif lies at 467–469 (ECD).

The protein belongs to the venom metalloproteinase (M12B) family. P-III subfamily. It depends on Zn(2+) as a cofactor. As to expression, expressed by the venom gland.

The protein localises to the secreted. Functionally, snake venom metalloproteinase that impairs hemostasis in the envenomed animal. The chain is Zinc metalloproteinase-disintegrin-like 2a from Crotalus adamanteus (Eastern diamondback rattlesnake).